The chain runs to 406 residues: MGNTTSEIQTQNVEAQPLISTEEQLSVDNPSIQSDQSVDTVENTVNDTVNDTVENTVNDTVQSIINKKYVHPVIDLINSNQSENEIIEVLKSFVGTNVVGTNENGQTIYDCVDQVELFGPAMQVFCHCACYGKKDVTDWILKNYVPLQVSYGDNFTFFETQKYKHFDISDMLVKHESFVPSYEVMQNLLSRSKYDLLEHCLNNPNLEKSHIDHYNLFIQYLSNKQYSNINELLVSLKKDSNTPIVSGNESETQPLQVTEIVNVNDNVTLDEISYSEIVTDTLPQNVESGIQLESTTEVKPESTTEVKPESTSEVQPESTTEFQPESTTVVEPESTTKVEPESTTEFQPESTTEVEPESTTEPQVESTTEFQPESSTEPQVESTVEVQAESMNESSYFQYNKPTYDI.

Gly2 carries N-myristoyl glycine; by host lipidation. The disordered stretch occupies residues 291 to 406 (QLESTTEVKP…FQYNKPTYDI (116 aa)). The span at 296-310 (TEVKPESTTEVKPES) shows a compositional bias: basic and acidic residues. A compositionally biased stretch (polar residues) spans 311-323 (TSEVQPESTTEFQ). Composition is skewed to low complexity over residues 324 to 333 (PESTTVVEPE), 341 to 351 (ESTTEFQPEST), and 359 to 369 (TTEPQVESTTE). The span at 370-406 (FQPESSTEPQVESTVEVQAESMNESSYFQYNKPTYDI) shows a compositional bias: polar residues.

This is an uncharacterized protein from Acanthamoeba polyphaga (Amoeba).